A 99-amino-acid chain; its full sequence is MANLKYYDVILKPIVTEKSMNSMSEKKYSFSVHPEATKTQVKEAVEKMFAGTKVASVNTMNLEGKNRRRGNTSGKTSKTKKAIVQLTADSAEIEIFTGL.

The protein belongs to the universal ribosomal protein uL23 family. In terms of assembly, part of the 50S ribosomal subunit. Contacts protein L29, and trigger factor when it is bound to the ribosome.

Functionally, one of the early assembly proteins it binds 23S rRNA. One of the proteins that surrounds the polypeptide exit tunnel on the outside of the ribosome. Forms the main docking site for trigger factor binding to the ribosome. This chain is Large ribosomal subunit protein uL23, found in Lachnoclostridium phytofermentans (strain ATCC 700394 / DSM 18823 / ISDg) (Clostridium phytofermentans).